The sequence spans 99 residues: Large ribosomal subunit protein uL23 (99 aa).

Belongs to the universal ribosomal protein uL23 family. Part of the 50S ribosomal subunit. Contacts protein L29, and trigger factor when it is bound to the ribosome.

One of the early assembly proteins it binds 23S rRNA. One of the proteins that surrounds the polypeptide exit tunnel on the outside of the ribosome. Forms the main docking site for trigger factor binding to the ribosome. The sequence is that of Large ribosomal subunit protein uL23 from Shewanella sediminis (strain HAW-EB3).